The following is a 63-amino-acid chain: Large ribosomal subunit protein bL32 (63 aa).

Basic residues predominate over residues 1 to 18 (MAHPKAKVSKSRRDKRRA). The disordered stretch occupies residues 1-25 (MAHPKAKVSKSRRDKRRAQFNARTK).

This sequence belongs to the bacterial ribosomal protein bL32 family.

This is Large ribosomal subunit protein bL32 from Chlorobium phaeovibrioides (strain DSM 265 / 1930) (Prosthecochloris vibrioformis (strain DSM 265)).